We begin with the raw amino-acid sequence, 267 residues long: Cytochrome b (267 aa).

Transmembrane regions (helical) follow at residues 33–53 (FGSLLGICLMIQILTGLFLAM), 77–98 (WLIRYLHANGASMFFICLFIHV), 113–133 (WNIGIILFLTTMATAFVGYVL), and 178–198 (FFAFHFILPFIITAFVLVHLL). Positions 83 and 97 each coordinate heme b. Heme b contacts are provided by His182 and His196. Residue His201 participates in a ubiquinone binding. A helical transmembrane segment spans residues 226-246 (IKDLLGVILLLMVLMILVLFF).

The protein belongs to the cytochrome b family. As to quaternary structure, the cytochrome bc1 complex contains 11 subunits: 3 respiratory subunits (MT-CYB, CYC1 and UQCRFS1), 2 core proteins (UQCRC1 and UQCRC2) and 6 low-molecular weight proteins (UQCRH/QCR6, UQCRB/QCR7, UQCRQ/QCR8, UQCR10/QCR9, UQCR11/QCR10 and a cleavage product of UQCRFS1). This cytochrome bc1 complex then forms a dimer. Heme b is required as a cofactor.

The protein resides in the mitochondrion inner membrane. Component of the ubiquinol-cytochrome c reductase complex (complex III or cytochrome b-c1 complex) that is part of the mitochondrial respiratory chain. The b-c1 complex mediates electron transfer from ubiquinol to cytochrome c. Contributes to the generation of a proton gradient across the mitochondrial membrane that is then used for ATP synthesis. The sequence is that of Cytochrome b (MT-CYB) from Abrothrix olivaceus (Olive grass mouse).